We begin with the raw amino-acid sequence, 128 residues long: Small ribosomal subunit protein bS6 (128 aa).

This sequence belongs to the bacterial ribosomal protein bS6 family.

In terms of biological role, binds together with bS18 to 16S ribosomal RNA. The protein is Small ribosomal subunit protein bS6 of Acinetobacter baylyi (strain ATCC 33305 / BD413 / ADP1).